We begin with the raw amino-acid sequence, 228 residues long: Potassium/proton antiporter CemA (228 aa).

The next 3 helical transmembrane spans lie at 6-26 (FIPL…SFSF), 113-133 (IICF…LFIL), and 188-208 (IISG…KYWI).

The protein belongs to the CemA family.

The protein localises to the plastid. It is found in the chloroplast inner membrane. It catalyses the reaction K(+)(in) + H(+)(out) = K(+)(out) + H(+)(in). Functionally, contributes to K(+)/H(+) antiport activity by supporting proton efflux to control proton extrusion and homeostasis in chloroplasts in a light-dependent manner to modulate photosynthesis. Prevents excessive induction of non-photochemical quenching (NPQ) under continuous-light conditions. Indirectly promotes efficient inorganic carbon uptake into chloroplasts. This chain is Potassium/proton antiporter CemA, found in Populus alba (White poplar).